Here is a 38-residue protein sequence, read N- to C-terminus: Large ribosomal subunit protein bL36 (38 aa).

Belongs to the bacterial ribosomal protein bL36 family.

This chain is Large ribosomal subunit protein bL36, found in Saccharophagus degradans (strain 2-40 / ATCC 43961 / DSM 17024).